The following is a 131-amino-acid chain: MAGTKPSELGALKVGQYVVIDGIACRVMDTAHSKPGKHGGAKVRLTAMGIFEPVKKEHVGPASSRIDVPLIDKRKGQVLALMGEHVQIMDLETYETLELPMPTDVEGIDSGVEVEYFEAMDRYKITRVISK.

Lysine 37 is modified (hypusine).

It belongs to the eIF-5A family.

The protein localises to the cytoplasm. Functionally, functions by promoting the formation of the first peptide bond. This Methanococcus maripaludis (strain DSM 14266 / JCM 13030 / NBRC 101832 / S2 / LL) protein is Translation initiation factor 5A.